Reading from the N-terminus, the 642-residue chain is RNA polymerase sigma factor RpoD (642 aa).

Residues His-199–Glu-228 are disordered. The span at Asn-212 to Glu-228 shows a compositional bias: acidic residues. A sigma-70 factor domain-2 region spans residues Met-403–Thr-473. Residues Asp-427 to Gln-430 carry the Interaction with polymerase core subunit RpoC motif. A sigma-70 factor domain-3 region spans residues Glu-482–Ala-558. The sigma-70 factor domain-4 stretch occupies residues Ile-571–His-624. The H-T-H motif DNA-binding region spans Leu-597–Ala-616.

Belongs to the sigma-70 factor family. RpoD/SigA subfamily. As to quaternary structure, interacts transiently with the RNA polymerase catalytic core.

It is found in the cytoplasm. Its function is as follows. Sigma factors are initiation factors that promote the attachment of RNA polymerase to specific initiation sites and are then released. This sigma factor is the primary sigma factor during exponential growth. The sequence is that of RNA polymerase sigma factor RpoD from Neisseria gonorrhoeae.